A 333-amino-acid chain; its full sequence is uncharacterized protein (333 aa).

The first 16 residues, 1–16 (MRPFLMILSVTYIASA), serve as a signal peptide directing secretion. N204 carries an N-linked (GlcNAc...) asparagine glycan.

This is an uncharacterized protein from Encephalitozoon cuniculi (strain GB-M1) (Microsporidian parasite).